Here is an 80-residue protein sequence, read N- to C-terminus: MSETIPKKPLKKGSLVFVDKNIYDKSIEALASDSDLPAYIFEGPGEILGIKEEYAQVRWRRPVPDVWFKLDQLKEYLASE.

The protein belongs to the complex I NdhO subunit family. NDH-1 can be composed of about 15 different subunits; different subcomplexes with different compositions have been identified which probably have different functions.

It is found in the cellular thylakoid membrane. It catalyses the reaction a plastoquinone + NADH + (n+1) H(+)(in) = a plastoquinol + NAD(+) + n H(+)(out). The enzyme catalyses a plastoquinone + NADPH + (n+1) H(+)(in) = a plastoquinol + NADP(+) + n H(+)(out). Its function is as follows. NDH-1 shuttles electrons from an unknown electron donor, via FMN and iron-sulfur (Fe-S) centers, to quinones in the respiratory and/or the photosynthetic chain. The immediate electron acceptor for the enzyme in this species is believed to be plastoquinone. Couples the redox reaction to proton translocation, and thus conserves the redox energy in a proton gradient. Cyanobacterial NDH-1 also plays a role in inorganic carbon-concentration. This is NAD(P)H-quinone oxidoreductase subunit O from Prochlorococcus marinus (strain MIT 9515).